A 285-amino-acid chain; its full sequence is Hydroxyacylglutathione hydrolase, mitochondrial (285 aa).

Residues 1–10 (MKFLLQQIRN) constitute a mitochondrion transit peptide. Residues H69, H71, D73, H74, H131, D154, and H198 each coordinate Zn(2+).

Zn(2+) is required as a cofactor.

It localises to the mitochondrion matrix. The enzyme catalyses an S-(2-hydroxyacyl)glutathione + H2O = a 2-hydroxy carboxylate + glutathione + H(+). It catalyses the reaction (R)-S-lactoylglutathione + H2O = (R)-lactate + glutathione + H(+). It functions in the pathway secondary metabolite metabolism; methylglyoxal degradation; (R)-lactate from methylglyoxal: step 2/2. With respect to regulation, inhibited by various thiol compounds such as glutathione and coenzyme A. Thiolesterase that catalyzes the hydrolysis of S-D-lactoylglutathione to form glutathione and D-lactic acid. Involved in the metabolism of methylglyoxal, a toxic compound for yeast proliferation, by converting methylglyoxal to lactate via S-D-lactoylglutathione by sequential enzyme reactions catalyzed by glyoxalase I and glyoxalase II. In Saccharomyces cerevisiae (strain ATCC 204508 / S288c) (Baker's yeast), this protein is Hydroxyacylglutathione hydrolase, mitochondrial.